The chain runs to 521 residues: Probable inorganic phosphate transporter 1-3 (521 aa).

The Cytoplasmic portion of the chain corresponds to 1-24 (MADQQLGVLKALDVAKTQLYHFTA). Residues 25-45 (IVIAGMGFFTDAYDLFCVSLV) form a helical membrane-spanning segment. The Extracellular portion of the chain corresponds to 46-70 (TKLLGRLYYFNPTSAKPGSLPPHVA). The helical transmembrane segment at 71 to 91 (AAVNGVALCGTLAGQLFFGWL) threads the bilayer. Topologically, residues 92–99 (GDKLGRKK) are cytoplasmic. The helical transmembrane segment at 100–120 (VYGITLIMMILCSVASGLSLG) threads the bilayer. At 121–131 (NSAKGVMTTLC) the chain is on the extracellular side. The helical transmembrane segment at 132–152 (FFRFWLGFGIGGDYPLSATIM) threads the bilayer. Residues 153-161 (SEYANKKTR) lie on the Cytoplasmic side of the membrane. A helical transmembrane segment spans residues 162-182 (GAFIAAVFAMQGVGILAGGFV). Over 183–211 (ALAVSSIFDKKFPSPTYEQDRFLSTPPQA) the chain is Extracellular. The helical transmembrane segment at 212-232 (DYIWRIIVMFGALPAALTYYW) threads the bilayer. Residues 233–292 (RMKMPETARYTALVAKNIKQATADMSKVLQTDLELEERVEDDVKDPKKNYGLFSKEFLRR) are Cytoplasmic-facing. The chain crosses the membrane as a helical span at residues 293–313 (HGLHLLGTTSTWFLLDIAFYS). At 314–348 (QNLFQKDIFSAIGWIPKAATMNAIHEVFKIARAQT) the chain is on the extracellular side. A helical transmembrane segment spans residues 349–369 (LIALCSTVPGYWFTVAFIDII). Residues 370-371 (GR) are Cytoplasmic-facing. A helical transmembrane segment spans residues 372-392 (FAIQLMGFFMMTVFMFAIAFP). At 393–402 (YNHWILPDNR) the chain is on the extracellular side. The helical transmembrane segment at 403 to 423 (IGFVVMYSLTFFFANFGPNAT) threads the bilayer. Residues 424 to 441 (TFIVPAEIFPARLRSTCH) lie on the Cytoplasmic side of the membrane. A helical transmembrane segment spans residues 442-462 (GISAATGKAGAIVGAFGFLYA). The Extracellular portion of the chain corresponds to 463-484 (AQPQDKTKTDAGYPPGIGVKNS). The helical transmembrane segment at 485–505 (LIMLGVINFVGMLFTFLVPEP) threads the bilayer. Residues 506–521 (KGKSLEELSGEAEVDK) are Cytoplasmic-facing.

The protein belongs to the major facilitator superfamily. Phosphate:H(+) symporter (TC 2.A.1.9) family. Mainly expressed in roots, especially in the stele of the primary root, the pericycle and trichoblasts of secondary roots. To a lower extent, present in hydathodes and vascular tissues of young leaves.

The protein resides in the membrane. Functionally, high-affinity transporter for external inorganic phosphate. The sequence is that of Probable inorganic phosphate transporter 1-3 (PHT1-3) from Arabidopsis thaliana (Mouse-ear cress).